The following is a 349-amino-acid chain: 3'-5' exoribonuclease 1 (349 aa).

Basic and acidic residues-rich tracts occupy residues 1–10 and 22–35; these read MEDPQSKEPA and PRPE…RPSP. Positions 1 to 48 are disordered; it reads MEDPQSKEPAGEAVALALLESPRPEGGEEPPRPSPEETQQCKFDGQET. A phosphoserine mark is found at serine 59 and serine 62. An SAP domain is found at 76–110; it reads INRMSKEELRAKLSEFKLETRGVKDVLKKRLKNYY. Residues 130–306 enclose the Exonuclease domain; that stretch reads ICIIDFEATC…DDSKNIARIA (177 aa). Positions 134 and 136 each coordinate Mg(2+). The Proton acceptor role is filled by glutamate 136. Residues glutamate 136 and alanine 137 each contribute to the AMP site. Aspartate 234 lines the Mg(2+) pocket. Histidine 293 serves as the catalytic Proton acceptor. Residue histidine 293 coordinates AMP. Aspartate 298 is a binding site for Mg(2+).

Identified in a histone pre-mRNA complex, at least composed of ERI1, LSM11, SLBP, SNRPB, SYNCRIP and YBX1. Interacts in a cooperative manner with SLBP to the mature 3'-end of histone mRNAs. Binds to 40S and 60S ribosomal subunits and to 80S assembled ribosomes. Found in a ternary complex with SLBP and the stem-loop structure of the 3'-end of histone mRNAs. Mg(2+) serves as cofactor.

The protein localises to the cytoplasm. The protein resides in the nucleus. Its subcellular location is the nucleolus. It catalyses the reaction Exonucleolytic cleavage in the 3'- to 5'-direction to yield nucleoside 5'-phosphates.. With respect to regulation, although it can bind simultaneously with SLBP to the 3'-end of histone mRNA, the presence of SLBP prevents the exonuclease activity. Functionally, RNA exonuclease that binds to the 3'-end of histone mRNAs and degrades them, suggesting that it plays an essential role in histone mRNA decay after replication. A 2' and 3'-hydroxyl groups at the last nucleotide of the histone 3'-end is required for efficient 3'-end histone mRNA exonuclease activity and degradation of RNA substrates. Also able to degrade the 3'-overhangs of short interfering RNAs (siRNAs) in vitro, suggesting a possible role as regulator of RNA interference (RNAi). Required for binding the 5'-ACCCA-3' sequence present in stem-loop structure. Able to bind other mRNAs. Required for 5.8S rRNA 3'-end processing. Also binds to 5.8s ribosomal RNA. Binds with high affinity to the stem-loop structure of replication-dependent histone pre-mRNAs. In vitro, does not have sequence specificity. In vitro, has weak DNA exonuclease activity. In vitro, shows biphasic kinetics such that there is rapid hydrolysis of the last three unpaired RNA nucleotides in the 39 flanking sequence followed by a much slower cleavage through the stem that occurs over a longer incubation period in the order of hours. ERI1-mediated RNA metabolism plays a key role in chondrogenesis. The chain is 3'-5' exoribonuclease 1 from Homo sapiens (Human).